Consider the following 292-residue polypeptide: 4-hydroxy-tetrahydrodipicolinate synthase (292 aa).

Thr-44 is a binding site for pyruvate. The active-site Proton donor/acceptor is Tyr-132. Lys-161 (schiff-base intermediate with substrate) is an active-site residue. Position 203 (Ile-203) interacts with pyruvate.

This sequence belongs to the DapA family. In terms of assembly, homotetramer; dimer of dimers.

The protein localises to the cytoplasm. It catalyses the reaction L-aspartate 4-semialdehyde + pyruvate = (2S,4S)-4-hydroxy-2,3,4,5-tetrahydrodipicolinate + H2O + H(+). Its pathway is amino-acid biosynthesis; L-lysine biosynthesis via DAP pathway; (S)-tetrahydrodipicolinate from L-aspartate: step 3/4. In terms of biological role, catalyzes the condensation of (S)-aspartate-beta-semialdehyde [(S)-ASA] and pyruvate to 4-hydroxy-tetrahydrodipicolinate (HTPA). This Fervidobacterium nodosum (strain ATCC 35602 / DSM 5306 / Rt17-B1) protein is 4-hydroxy-tetrahydrodipicolinate synthase.